A 543-amino-acid polypeptide reads, in one-letter code: CTP synthase (543 aa).

The amidoligase domain stretch occupies residues 1-267 (MTKYVFVTGG…ATQVLNLLNL (267 aa)). S13 is a CTP binding site. S13 lines the UTP pocket. ATP-binding positions include 14–19 (SIGKGI) and D71. 2 residues coordinate Mg(2+): D71 and E141. CTP is bound by residues 148 to 150 (DIE), 188 to 193 (KTKPTQ), and K224. UTP is bound by residues 188-193 (KTKPTQ) and K224. The Glutamine amidotransferase type-1 domain maps to 292-534 (EVAIVGKYVR…LAAAAKNSNR (243 aa)). Residue G354 coordinates L-glutamine. C381 functions as the Nucleophile; for glutamine hydrolysis in the catalytic mechanism. Residues 382–385 (LGMQ), E405, and R462 contribute to the L-glutamine site. Catalysis depends on residues H507 and E509.

This sequence belongs to the CTP synthase family. In terms of assembly, homotetramer.

The catalysed reaction is UTP + L-glutamine + ATP + H2O = CTP + L-glutamate + ADP + phosphate + 2 H(+). It carries out the reaction L-glutamine + H2O = L-glutamate + NH4(+). It catalyses the reaction UTP + NH4(+) + ATP = CTP + ADP + phosphate + 2 H(+). Its pathway is pyrimidine metabolism; CTP biosynthesis via de novo pathway; CTP from UDP: step 2/2. Its activity is regulated as follows. Allosterically activated by GTP, when glutamine is the substrate; GTP has no effect on the reaction when ammonia is the substrate. The allosteric effector GTP functions by stabilizing the protein conformation that binds the tetrahedral intermediate(s) formed during glutamine hydrolysis. Inhibited by the product CTP, via allosteric rather than competitive inhibition. Its function is as follows. Catalyzes the ATP-dependent amination of UTP to CTP with either L-glutamine or ammonia as the source of nitrogen. Regulates intracellular CTP levels through interactions with the four ribonucleotide triphosphates. In Thermosynechococcus vestitus (strain NIES-2133 / IAM M-273 / BP-1), this protein is CTP synthase.